Reading from the N-terminus, the 346-residue chain is MAHRPRWTLSQVTELFEKPLLDLLFEAQQVHRQHFEPRQVQVSTLLSIKTGACPEDCKYCPQSSRYKTGLEAERLMEVEQVLESARKAKAAGSTRFCMGAAWKNPHERDMPYLEQMVQGVKAMGLEACMTLGTLSESQAQRLANAGLDYYNHNLDTSPEFYGNIITTRTYQERLDTLEKVRDAGIKVCSGGIVGLGETVKDRAGLLLQLANLPTPPESVPINMLVKVKGTPLADNDDVDAFDFIRTIAVARIMMPTSYVRLSAGREQMNEQTQAMCFMAGANSIFYGCKLLTTPNPEEDKDLQLFRKLGLNPQQTAVLAGDNEQQQRLGQALMTPDTDEYYNAAAL.

Residues 38–256 (RQVQVSTLLS…IAVARIMMPT (219 aa)) enclose the Radical SAM core domain. Residues Cys53, Cys57, and Cys60 each contribute to the [4Fe-4S] cluster site. [2Fe-2S] cluster contacts are provided by Cys97, Cys128, Cys188, and Arg260.

It belongs to the radical SAM superfamily. Biotin synthase family. Homodimer. Requires [4Fe-4S] cluster as cofactor. It depends on [2Fe-2S] cluster as a cofactor.

It carries out the reaction (4R,5S)-dethiobiotin + (sulfur carrier)-SH + 2 reduced [2Fe-2S]-[ferredoxin] + 2 S-adenosyl-L-methionine = (sulfur carrier)-H + biotin + 2 5'-deoxyadenosine + 2 L-methionine + 2 oxidized [2Fe-2S]-[ferredoxin]. It participates in cofactor biosynthesis; biotin biosynthesis; biotin from 7,8-diaminononanoate: step 2/2. Its function is as follows. Catalyzes the conversion of dethiobiotin (DTB) to biotin by the insertion of a sulfur atom into dethiobiotin via a radical-based mechanism. This is Biotin synthase from Shigella flexneri serotype 5b (strain 8401).